Consider the following 361-residue polypeptide: Histidinol-phosphate aminotransferase (361 aa).

Residue K224 is modified to N6-(pyridoxal phosphate)lysine.

It belongs to the class-II pyridoxal-phosphate-dependent aminotransferase family. Histidinol-phosphate aminotransferase subfamily. Homodimer. Requires pyridoxal 5'-phosphate as cofactor.

It catalyses the reaction L-histidinol phosphate + 2-oxoglutarate = 3-(imidazol-4-yl)-2-oxopropyl phosphate + L-glutamate. It functions in the pathway amino-acid biosynthesis; L-histidine biosynthesis; L-histidine from 5-phospho-alpha-D-ribose 1-diphosphate: step 7/9. The sequence is that of Histidinol-phosphate aminotransferase from Limosilactobacillus fermentum (strain NBRC 3956 / LMG 18251) (Lactobacillus fermentum).